The following is a 216-amino-acid chain: Transmembrane emp24 domain-containing protein eca (216 aa).

The signal sequence occupies residues Met-1 to Gly-20. At Leu-21 to Ser-182 the chain is on the lumenal side. The GOLD domain maps to Arg-30–Val-126. Positions Ala-134 to Asn-164 form a coiled coil. A helical transmembrane segment spans residues Arg-183–Met-203. Residues Arg-204–Val-216 are Cytoplasmic-facing. The Prevents secretion from ER signature appears at Lys-213–Val-216.

Belongs to the EMP24/GP25L family.

It is found in the endoplasmic reticulum membrane. In terms of biological role, eca and bai are essential, though not redundant, for dorsoventral patterning of the embryo. Specifically required during early embryogenesis for the activity of maternal tkv, while the zygotic tkv is not affected. Involved in Golgi organization. This is Transmembrane emp24 domain-containing protein eca from Drosophila melanogaster (Fruit fly).